Consider the following 364-residue polypeptide: sn-glycerol-3-phosphate import ATP-binding protein UgpC (364 aa).

An ABC transporter domain is found at 4-235 (VVLRNVRKTY…PATTFVASFI (232 aa)). Residue 37 to 44 (GPSGCGKS) participates in ATP binding.

The protein belongs to the ABC transporter superfamily. sn-glycerol-3-phosphate importer (TC 3.A.1.1.3) family. As to quaternary structure, the complex is composed of two ATP-binding proteins (UgpC), two transmembrane proteins (UgpA and UgpE) and a solute-binding protein (UgpB).

It is found in the cell inner membrane. It carries out the reaction sn-glycerol 3-phosphate(out) + ATP + H2O = sn-glycerol 3-phosphate(in) + ADP + phosphate + H(+). Part of the ABC transporter complex UgpBAEC involved in sn-glycerol-3-phosphate (G3P) import. Responsible for energy coupling to the transport system. The polypeptide is sn-glycerol-3-phosphate import ATP-binding protein UgpC (Rhodopseudomonas palustris (strain HaA2)).